We begin with the raw amino-acid sequence, 78 residues long: Small ribosomal subunit protein bS18 (78 aa).

It belongs to the bacterial ribosomal protein bS18 family. Part of the 30S ribosomal subunit. Forms a tight heterodimer with protein bS6.

In terms of biological role, binds as a heterodimer with protein bS6 to the central domain of the 16S rRNA, where it helps stabilize the platform of the 30S subunit. The chain is Small ribosomal subunit protein bS18 from Lacticaseibacillus casei (strain BL23) (Lactobacillus casei).